Reading from the N-terminus, the 309-residue chain is Carbamate kinase (309 aa).

This sequence belongs to the carbamate kinase family.

It localises to the cytoplasm. The enzyme catalyses hydrogencarbonate + NH4(+) + ATP = carbamoyl phosphate + ADP + H2O + H(+). It participates in metabolic intermediate metabolism; carbamoyl phosphate degradation; CO(2) and NH(3) from carbamoyl phosphate: step 1/1. The sequence is that of Carbamate kinase (arcC) from Staphylococcus haemolyticus (strain JCSC1435).